Here is a 286-residue protein sequence, read N- to C-terminus: 4-hydroxybenzoate octaprenyltransferase (286 aa).

A run of 7 helical transmembrane segments spans residues 21-40, 95-115, 142-162, 167-187, 210-230, 235-255, and 266-286; these read GTLLLLWPCLMALMLAAGGM, ILFVILGLSAFGLVLLLNGLV, FLGIVWSWSIPMAYAAQTGEV, WWLFAANWCWTVAYDTMYAMV, QIIGLFQLAALACFIAAGWSA, LYGLGILTFVGFSTYQQMLIF, and FLNNNWAGLALFVGLGADYLI.

It belongs to the UbiA prenyltransferase family. Requires Mg(2+) as cofactor.

The protein resides in the cell inner membrane. It catalyses the reaction all-trans-octaprenyl diphosphate + 4-hydroxybenzoate = 4-hydroxy-3-(all-trans-octaprenyl)benzoate + diphosphate. It functions in the pathway cofactor biosynthesis; ubiquinone biosynthesis. Functionally, catalyzes the prenylation of para-hydroxybenzoate (PHB) with an all-trans polyprenyl group. Mediates the second step in the final reaction sequence of ubiquinone-8 (UQ-8) biosynthesis, which is the condensation of the polyisoprenoid side chain with PHB, generating the first membrane-bound Q intermediate 3-octaprenyl-4-hydroxybenzoate. In Shewanella baltica (strain OS185), this protein is 4-hydroxybenzoate octaprenyltransferase.